Here is a 118-residue protein sequence, read N- to C-terminus: MASEVTSAKAVAKTVRIAPRKARIVIDLIRGKQVGEAIAILKYTPRSASPIIEKVLKSAIANAEHNYDLDINNLVVEEAFVDEGPTLKRFRPRAQGRASAINKRTSHITVVVSEVKEG.

It belongs to the universal ribosomal protein uL22 family. Part of the 50S ribosomal subunit.

In terms of biological role, this protein binds specifically to 23S rRNA; its binding is stimulated by other ribosomal proteins, e.g. L4, L17, and L20. It is important during the early stages of 50S assembly. It makes multiple contacts with different domains of the 23S rRNA in the assembled 50S subunit and ribosome. Its function is as follows. The globular domain of the protein is located near the polypeptide exit tunnel on the outside of the subunit, while an extended beta-hairpin is found that lines the wall of the exit tunnel in the center of the 70S ribosome. The protein is Large ribosomal subunit protein uL22 of Listeria innocua serovar 6a (strain ATCC BAA-680 / CLIP 11262).